The sequence spans 128 residues: D-ribose pyranase (128 aa).

Residue histidine 20 is the Proton donor of the active site. Substrate contacts are provided by residues aspartate 28, histidine 95, and 117–119 (YSN).

The protein belongs to the RbsD / FucU family. RbsD subfamily. As to quaternary structure, homodecamer.

Its subcellular location is the cytoplasm. The catalysed reaction is beta-D-ribopyranose = beta-D-ribofuranose. Its pathway is carbohydrate metabolism; D-ribose degradation; D-ribose 5-phosphate from beta-D-ribopyranose: step 1/2. Its function is as follows. Catalyzes the interconversion of beta-pyran and beta-furan forms of D-ribose. The polypeptide is D-ribose pyranase (Thermosipho africanus (strain TCF52B)).